A 321-amino-acid polypeptide reads, in one-letter code: Lipoyl synthase (321 aa).

Cysteine 68, cysteine 73, cysteine 79, cysteine 94, cysteine 98, cysteine 101, and serine 308 together coordinate [4Fe-4S] cluster. The region spanning 80-297 is the Radical SAM core domain; that stretch reads FNHGTATFMI…KALADELGFT (218 aa).

Belongs to the radical SAM superfamily. Lipoyl synthase family. It depends on [4Fe-4S] cluster as a cofactor.

The protein localises to the cytoplasm. It carries out the reaction [[Fe-S] cluster scaffold protein carrying a second [4Fe-4S](2+) cluster] + N(6)-octanoyl-L-lysyl-[protein] + 2 oxidized [2Fe-2S]-[ferredoxin] + 2 S-adenosyl-L-methionine + 4 H(+) = [[Fe-S] cluster scaffold protein] + N(6)-[(R)-dihydrolipoyl]-L-lysyl-[protein] + 4 Fe(3+) + 2 hydrogen sulfide + 2 5'-deoxyadenosine + 2 L-methionine + 2 reduced [2Fe-2S]-[ferredoxin]. It participates in protein modification; protein lipoylation via endogenous pathway; protein N(6)-(lipoyl)lysine from octanoyl-[acyl-carrier-protein]: step 2/2. Functionally, catalyzes the radical-mediated insertion of two sulfur atoms into the C-6 and C-8 positions of the octanoyl moiety bound to the lipoyl domains of lipoate-dependent enzymes, thereby converting the octanoylated domains into lipoylated derivatives. The polypeptide is Lipoyl synthase (Shewanella baltica (strain OS223)).